The following is a 210-amino-acid chain: Large ribosomal subunit protein uL4 (210 aa).

Residues 41 to 51 (ANARQGTQSTK) show a composition bias toward polar residues. 2 disordered regions span residues 41–60 (ANARQGTQSTKTRGEVQGSS) and 67–98 (KGTGNARMGTNRSPVRRHGGVAFGPRPRDFSK).

Belongs to the universal ribosomal protein uL4 family. In terms of assembly, part of the 50S ribosomal subunit.

In terms of biological role, one of the primary rRNA binding proteins, this protein initially binds near the 5'-end of the 23S rRNA. It is important during the early stages of 50S assembly. It makes multiple contacts with different domains of the 23S rRNA in the assembled 50S subunit and ribosome. Functionally, forms part of the polypeptide exit tunnel. This is Large ribosomal subunit protein uL4 from Dehalococcoides mccartyi (strain ATCC BAA-2100 / JCM 16839 / KCTC 5957 / BAV1).